We begin with the raw amino-acid sequence, 368 residues long: tRNA-specific 2-thiouridylase MnmA (368 aa).

ATP-binding positions include 11–18 (GMSGGVDS) and Met37. The interaction with target base in tRNA stretch occupies residues 97–99 (NPD). The Nucleophile role is filled by Cys102. Residues Cys102 and Cys199 are joined by a disulfide bond. Gly127 contributes to the ATP binding site. Residues 149–151 (KDQ) are interaction with tRNA. The Cysteine persulfide intermediate role is filled by Cys199. Positions 311–312 (RY) are interaction with tRNA.

Belongs to the MnmA/TRMU family. In terms of assembly, interacts with TusE.

The protein resides in the cytoplasm. It carries out the reaction S-sulfanyl-L-cysteinyl-[protein] + uridine(34) in tRNA + AH2 + ATP = 2-thiouridine(34) in tRNA + L-cysteinyl-[protein] + A + AMP + diphosphate + H(+). Catalyzes the 2-thiolation of uridine at the wobble position (U34) of tRNA(Lys), tRNA(Glu) and tRNA(Gln), leading to the formation of s(2)U34, the first step of tRNA-mnm(5)s(2)U34 synthesis. Sulfur is provided by IscS, via a sulfur-relay system. Binds ATP and its substrate tRNAs. This is tRNA-specific 2-thiouridylase MnmA from Klebsiella pneumoniae subsp. pneumoniae (strain ATCC 700721 / MGH 78578).